Consider the following 621-residue polypeptide: Rab11 family-interacting protein 4A (621 aa).

EF-hand domains are found at residues 14-49 (AFLKKLKEVFDVCDEDADGYIRVEHFVDLGLQFGQG) and 47-82 (GQGDEVKKFAKYLDPNAHGRINFKDFCHGVFAIKGC). Ca(2+) is bound by residues aspartate 27, aspartate 29, aspartate 31, tyrosine 33, histidine 38, aspartate 60, asparagine 62, arginine 66, and aspartate 71. Disordered stretches follow at residues 132–172 (YSDE…KEEG) and 203–243 (DYGE…GQTP). The segment covering 151 to 161 (AADSGAGSESS) has biased composition (low complexity). Basic and acidic residues predominate over residues 162–172 (EGGRQDDKEEG). Residues 225 to 243 (TNGFSDLGSSLPSSAGQTP) are compositionally biased toward polar residues. The stretch at 348–556 (DLKSKLKQEN…LNGQILSLSL (209 aa)) forms a coiled coil. In terms of domain architecture, FIP-RBD spans 558–620 (EAKNLFACHT…DHNPSILEIK (63 aa)).

As to quaternary structure, homodimer. Forms a complex with Rab11 (rab11a or rab11b) and arf6. Isoform 1 is predominantly expressed in neural tissues. Isoform B is expressed ubiquitously. In the developing retina, it is expressed in progenitors throughout the retina at early stages and becomes restricted to the ganglion cell layer and ciliary marginal zone as differentiation proceeds.

The protein localises to the recycling endosome membrane. The protein resides in the cleavage furrow. Its subcellular location is the midbody. It is found in the cytoplasmic vesicle. Functionally, acts as a regulator of endocytic traffic by participating in membrane delivery. Required for the abscission step in cytokinesis, possibly by acting as an 'address tag' delivering recycling endosome membranes to the cleavage furrow during late cytokinesis. May play a role in differentiation during retinal development. The sequence is that of Rab11 family-interacting protein 4A (rab11fip4a) from Danio rerio (Zebrafish).